We begin with the raw amino-acid sequence, 683 residues long: E3 ubiquitin-protein ligase WAVH1 (683 aa).

The segment at 130 to 176 (CGICLQSVKSGQGTAIFTAECSHTFHFPCVTSRAAANHNRLASCPVC) adopts an RING-type; atypical zinc-finger fold. In terms of domain architecture, VWFA spans 302–438 (DLVAVLDVSG…AHSRIPIHTI (137 aa)).

Expressed in root tips and leaf primordia.

The enzyme catalyses S-ubiquitinyl-[E2 ubiquitin-conjugating enzyme]-L-cysteine + [acceptor protein]-L-lysine = [E2 ubiquitin-conjugating enzyme]-L-cysteine + N(6)-ubiquitinyl-[acceptor protein]-L-lysine.. E3 ubiquitin-protein ligase involved in the regulation of root growth. Acts as a positive regulator of root gravitropism. Possesses E3 protein ligase activity in vitro. This chain is E3 ubiquitin-protein ligase WAVH1, found in Arabidopsis thaliana (Mouse-ear cress).